The sequence spans 368 residues: Probable dual-specificity RNA methyltransferase RlmN (368 aa).

The Proton acceptor role is filled by Glu109. The region spanning 115–355 (YPDRVTMCIS…VTIRDTRGQE (241 aa)) is the Radical SAM core domain. Cys122 and Cys360 are disulfide-bonded. Cys129, Cys133, and Cys136 together coordinate [4Fe-4S] cluster. S-adenosyl-L-methionine is bound by residues 184-185 (GE), Ser218, 241-243 (SLH), and Asn317. The S-methylcysteine intermediate role is filled by Cys360.

It belongs to the radical SAM superfamily. RlmN family. Requires [4Fe-4S] cluster as cofactor.

The protein localises to the cytoplasm. The catalysed reaction is adenosine(2503) in 23S rRNA + 2 reduced [2Fe-2S]-[ferredoxin] + 2 S-adenosyl-L-methionine = 2-methyladenosine(2503) in 23S rRNA + 5'-deoxyadenosine + L-methionine + 2 oxidized [2Fe-2S]-[ferredoxin] + S-adenosyl-L-homocysteine. It catalyses the reaction adenosine(37) in tRNA + 2 reduced [2Fe-2S]-[ferredoxin] + 2 S-adenosyl-L-methionine = 2-methyladenosine(37) in tRNA + 5'-deoxyadenosine + L-methionine + 2 oxidized [2Fe-2S]-[ferredoxin] + S-adenosyl-L-homocysteine. Specifically methylates position 2 of adenine 2503 in 23S rRNA and position 2 of adenine 37 in tRNAs. The chain is Probable dual-specificity RNA methyltransferase RlmN from Streptomyces coelicolor (strain ATCC BAA-471 / A3(2) / M145).